Consider the following 340-residue polypeptide: Glycerol-3-phosphate dehydrogenase [NAD(P)+] (340 aa).

NADPH contacts are provided by Ser-15, Tyr-16, His-36, and Lys-110. 3 residues coordinate sn-glycerol 3-phosphate: Lys-110, Gly-139, and Thr-141. Ala-143 provides a ligand contact to NADPH. Sn-glycerol 3-phosphate-binding residues include Lys-196, Asp-249, Ser-259, Arg-260, and Asn-261. The active-site Proton acceptor is the Lys-196. Position 260 (Arg-260) interacts with NADPH. 2 residues coordinate NADPH: Val-284 and Glu-286.

It belongs to the NAD-dependent glycerol-3-phosphate dehydrogenase family.

The protein resides in the cytoplasm. The enzyme catalyses sn-glycerol 3-phosphate + NAD(+) = dihydroxyacetone phosphate + NADH + H(+). It carries out the reaction sn-glycerol 3-phosphate + NADP(+) = dihydroxyacetone phosphate + NADPH + H(+). The protein operates within membrane lipid metabolism; glycerophospholipid metabolism. In terms of biological role, catalyzes the reduction of the glycolytic intermediate dihydroxyacetone phosphate (DHAP) to sn-glycerol 3-phosphate (G3P), the key precursor for phospholipid synthesis. The protein is Glycerol-3-phosphate dehydrogenase [NAD(P)+] of Serratia marcescens.